We begin with the raw amino-acid sequence, 85 residues long: Small ribosomal subunit protein uS17 (85 aa).

This sequence belongs to the universal ribosomal protein uS17 family. Part of the 30S ribosomal subunit.

One of the primary rRNA binding proteins, it binds specifically to the 5'-end of 16S ribosomal RNA. The sequence is that of Small ribosomal subunit protein uS17 from Anaeromyxobacter sp. (strain Fw109-5).